Here is a 152-residue protein sequence, read N- to C-terminus: Venom protein family 1 protein 2 (152 aa).

Positions methionine 1 to glycine 21 are cleaved as a signal peptide. Cysteine 70 and cysteine 150 are disulfide-bonded.

Belongs to the insect vpf1 family. Expressed by the venom gland (posterior main gland) (at protein level).

It is found in the secreted. This Platymeris rhadamanthus (Red spot assassin bug) protein is Venom protein family 1 protein 2.